Reading from the N-terminus, the 888-residue chain is Extra-large guanine nucleotide-binding protein 1 (888 aa).

Residues 98-119 (SVIEHTEEEEEEEGGDGEDCEL) are disordered. Residues 103–118 (TEEEEEEEGGDGEDCE) show a composition bias toward acidic residues. Residues 205–222 (RRVRVVPVKKQPQTKGKK) carry the Nuclear localization signal motif. The segment at 225 to 268 (CYRCFKGSRFTEKEVCLVCDAKYCNSCVLRAMGSMPEGRKCVTC) adopts an RING-type; degenerate zinc-finger fold. One can recognise a G-alpha domain in the interval 482-879 (TLQKILLVGN…NICMSEYSMY (398 aa)). Residues 485 to 498 (KILLVGNSGSGTST) are G1 motif. Residues 490–498 (GNSGSGTST) and 661–669 (DILYAEGVT) each bind GTP. Residues serine 497 and threonine 669 each contribute to the Ca(2+) site. A G2 motif region spans residues 661–669 (DILYAEGVT). A G3 motif region spans residues 702–711 (YQLIRVPSRG). The G4 motif stretch occupies residues 770 to 777 (LLILNKYD). 774–777 (NKYD) contacts GTP. The G5 motif stretch occupies residues 843–848 (SKSLDP).

It belongs to the G-alpha family. XLG subfamily. It depends on Ca(2+) as a cofactor. Ubiquitous. Strongly expressed in vascular tissues, root and shoot meristems and lateral root primordia.

It localises to the nucleus. Functionally, guanine nucleotide-binding proteins (G proteins) are involved as modulators or transducers in various transmembrane signaling systems. Binds GTP with specificity. Plays a role in the root morphogenesis by regulation of the cell proliferation. The chain is Extra-large guanine nucleotide-binding protein 1 (XLG1) from Arabidopsis thaliana (Mouse-ear cress).